The chain runs to 417 residues: V-set and immunoglobulin domain-containing protein 8 (417 aa).

The signal sequence occupies residues 1–21; that stretch reads MGVRGALHLLLVCLSPALLSA. Ig-like V-type domains lie at 22–140 and 145–256; these read VRIN…VIVT and PAVP…VKVS. The Extracellular segment spans residues 22-262; sequence VRINGDGQEV…VKVSDSQRVG (241 aa). Cystine bridges form between Cys-44–Cys-125 and Cys-166–Cys-238. The helical transmembrane segment at 263-283 threads the bilayer; that stretch reads MIVGAVLGSLLMLACLALGIW. Topologically, residues 284 to 417 are cytoplasmic; the sequence is GLICCCCGGG…QRSCKDGLLV (134 aa).

It localises to the membrane. This Mus musculus (Mouse) protein is V-set and immunoglobulin domain-containing protein 8 (Vsig8).